The following is a 58-amino-acid chain: UPF0391 membrane protein Shew185_1413 (58 aa).

2 consecutive transmembrane segments (helical) span residues 6 to 26 (LVFL…IAGA) and 28 to 48 (AGIA…SLLI).

The protein belongs to the UPF0391 family.

Its subcellular location is the cell membrane. The sequence is that of UPF0391 membrane protein Shew185_1413 from Shewanella baltica (strain OS185).